A 403-amino-acid chain; its full sequence is 8-amino-7-oxononanoate synthase (403 aa).

Arg25 is a binding site for substrate. 112 to 113 (GY) contacts pyridoxal 5'-phosphate. Position 137 (His137) interacts with substrate. Pyridoxal 5'-phosphate is bound by residues Ser182, His210, and Thr239. At Lys242 the chain carries N6-(pyridoxal phosphate)lysine. A substrate-binding site is contributed by Thr358.

This sequence belongs to the class-II pyridoxal-phosphate-dependent aminotransferase family. BioF subfamily. As to quaternary structure, homodimer. It depends on pyridoxal 5'-phosphate as a cofactor.

The enzyme catalyses 6-carboxyhexanoyl-[ACP] + L-alanine + H(+) = (8S)-8-amino-7-oxononanoate + holo-[ACP] + CO2. It functions in the pathway cofactor biosynthesis; biotin biosynthesis. In terms of biological role, catalyzes the decarboxylative condensation of pimeloyl-[acyl-carrier protein] and L-alanine to produce 8-amino-7-oxononanoate (AON), [acyl-carrier protein], and carbon dioxide. The chain is 8-amino-7-oxononanoate synthase from Marinomonas sp. (strain MWYL1).